Reading from the N-terminus, the 292-residue chain is NAD kinase (292 aa).

The active-site Proton acceptor is aspartate 73. NAD(+)-binding positions include 73 to 74, 147 to 148, histidine 158, arginine 175, aspartate 177, 188 to 193, and glutamine 247; these read DG, NE, and TAYSLS.

It belongs to the NAD kinase family. It depends on a divalent metal cation as a cofactor.

The protein resides in the cytoplasm. It catalyses the reaction NAD(+) + ATP = ADP + NADP(+) + H(+). In terms of biological role, involved in the regulation of the intracellular balance of NAD and NADP, and is a key enzyme in the biosynthesis of NADP. Catalyzes specifically the phosphorylation on 2'-hydroxyl of the adenosine moiety of NAD to yield NADP. This chain is NAD kinase, found in Shigella dysenteriae serotype 1 (strain Sd197).